A 399-amino-acid chain; its full sequence is UDP-N-acetylglucosamine--N-acetylmuramyl-(pentapeptide) pyrophosphoryl-undecaprenol N-acetylglucosamine transferase (399 aa).

The segment covering 1–21 (MTSRFGHSHHPRRGRSARARA) has biased composition (basic residues). The disordered stretch occupies residues 1–30 (MTSRFGHSHHPRRGRSARARAGRREGVQSN). UDP-N-acetyl-alpha-D-glucosamine is bound by residues 58 to 60 (TGG), Asn170, Arg206, Ser234, Ile288, and Gln333.

This sequence belongs to the glycosyltransferase 28 family. MurG subfamily.

It is found in the cell inner membrane. The enzyme catalyses di-trans,octa-cis-undecaprenyl diphospho-N-acetyl-alpha-D-muramoyl-L-alanyl-D-glutamyl-meso-2,6-diaminopimeloyl-D-alanyl-D-alanine + UDP-N-acetyl-alpha-D-glucosamine = di-trans,octa-cis-undecaprenyl diphospho-[N-acetyl-alpha-D-glucosaminyl-(1-&gt;4)]-N-acetyl-alpha-D-muramoyl-L-alanyl-D-glutamyl-meso-2,6-diaminopimeloyl-D-alanyl-D-alanine + UDP + H(+). It functions in the pathway cell wall biogenesis; peptidoglycan biosynthesis. Functionally, cell wall formation. Catalyzes the transfer of a GlcNAc subunit on undecaprenyl-pyrophosphoryl-MurNAc-pentapeptide (lipid intermediate I) to form undecaprenyl-pyrophosphoryl-MurNAc-(pentapeptide)GlcNAc (lipid intermediate II). This chain is UDP-N-acetylglucosamine--N-acetylmuramyl-(pentapeptide) pyrophosphoryl-undecaprenol N-acetylglucosamine transferase, found in Acidovorax ebreus (strain TPSY) (Diaphorobacter sp. (strain TPSY)).